A 46-amino-acid chain; its full sequence is Apamin (46 aa).

Positions 1–27 are cleaved as a signal peptide; sequence MISMLRCISLFLSVILITGYFVTPVMS. Cystine bridges form between C28/C38 and C30/C42. Residues 40 to 41 form an essential for toxin activity region; sequence RR. The residue at position 45 (H45) is a Histidine amide.

As to expression, expressed by the venom gland.

The protein localises to the secreted. In terms of biological role, neurotoxin that blocks voltage-independent calcium-activated potassium channels (KCNN1=SK1, KCNN2=SK2, KCNN3=SK3). The protein is Apamin of Apis cerana cerana (Oriental honeybee).